A 311-amino-acid polypeptide reads, in one-letter code: Mediator of RNA polymerase II transcription subunit 27 (311 aa).

Belongs to the Mediator complex subunit 27 family. As to quaternary structure, component of the Mediator complex.

The protein localises to the nucleus. Its function is as follows. Component of the Mediator complex, a coactivator involved in the regulated transcription of nearly all RNA polymerase II-dependent genes. Mediator functions as a bridge to convey information from gene-specific regulatory proteins to the basal RNA polymerase II transcription machinery. Mediator is recruited to promoters by direct interactions with regulatory proteins and serves as a scaffold for the assembly of a functional preinitiation complex with RNA polymerase II and the general transcription factors. Required for the development of dopaminergic amacrine cells in the retina. May also negatively regulate the development of rod photoreceptor cells. In Danio rerio (Zebrafish), this protein is Mediator of RNA polymerase II transcription subunit 27 (med27).